We begin with the raw amino-acid sequence, 314 residues long: MSRPRRRGRDINGVLLLDKPQGMSSNDALQKVKRIYNANRAGHTGALDPLATGMLPICLGEATKFSQYLLDSDKRYRVIARLGQRTDTSDADGQIVEERPVTFSAEQLAAALDTFRGDIEQIPSMYSALKYQGKKLYEYARQGIEVPREARPITVYELLFIRHEGNELELEIHCSKGTYIRTIIDDLGEKLGCGAHVIYLRRLAVSKYPVERIVTLEHLRELVEQAEQQDIPAAELLDPLLMPMDSPASDYPVVNLPLTSSVYFKNGNPVRTSGAPLEGLVRVTEGENGKFIGMGEIDDEGRVAPRRLVVEYPA.

Position 43 (H43) interacts with substrate. Residue D48 is the Nucleophile of the active site. Residues Y76, Y179, and L200 each coordinate substrate.

Belongs to the pseudouridine synthase TruB family. Type 1 subfamily.

It carries out the reaction uridine(55) in tRNA = pseudouridine(55) in tRNA. Its function is as follows. Responsible for synthesis of pseudouridine from uracil-55 in the psi GC loop of transfer RNAs. The polypeptide is tRNA pseudouridine synthase B (Shigella flexneri).